The chain runs to 55 residues: uncharacterized protein (55 aa).

Residues 17–44 adopt a coiled-coil conformation; the sequence is QNVNIALTKKRLDTAQQNADQTLKMIQH.

This is an uncharacterized protein from Bacillus subtilis (strain 168).